The chain runs to 180 residues: Translation initiation factor IF-3 (180 aa).

The protein belongs to the IF-3 family. In terms of assembly, monomer.

It is found in the cytoplasm. In terms of biological role, IF-3 binds to the 30S ribosomal subunit and shifts the equilibrium between 70S ribosomes and their 50S and 30S subunits in favor of the free subunits, thus enhancing the availability of 30S subunits on which protein synthesis initiation begins. This chain is Translation initiation factor IF-3, found in Salmonella typhimurium (strain LT2 / SGSC1412 / ATCC 700720).